Here is a 190-residue protein sequence, read N- to C-terminus: Ganglioside GM2 activator (190 aa).

Residues 1-23 form the signal peptide; sequence MQSLMQAPVLIALGLLFAAPAQA. 4 disulfides stabilise this stretch: Cys-36–Cys-180, Cys-96–Cys-103, Cys-109–Cys-135, and Cys-122–Cys-133. A glycan (N-linked (GlcNAc...) asparagine) is linked at Asn-60.

It localises to the lysosome. It carries out the reaction cholesterol(in) = cholesterol(out). In terms of biological role, the large binding pocket can accommodate several single chain phospholipids and fatty acids, GM2A also exhibits some calcium-independent phospholipase activity. Binds gangliosides and stimulates ganglioside GM2 degradation. It stimulates only the breakdown of ganglioside GM2 and glycolipid GA2 by beta-hexosaminidase A. It extracts single GM2 molecules from membranes and presents them in soluble form to beta-hexosaminidase A for cleavage of N-acetyl-D-galactosamine and conversion to GM3. Has cholesterol transfer activity. The polypeptide is Ganglioside GM2 activator (GM2A) (Macaca fascicularis (Crab-eating macaque)).